Here is a 240-residue protein sequence, read N- to C-terminus: Uridylate kinase (240 aa).

ATP is bound at residue 13–16; the sequence is KLSG. The involved in allosteric activation by GTP stretch occupies residues 21-26; sequence GEKGFG. G55 is a UMP binding site. ATP contacts are provided by G56 and R60. UMP contacts are provided by residues D75 and 136 to 143; that span reads IGNPYFST. ATP contacts are provided by N164, Y170, and D173.

The protein belongs to the UMP kinase family. As to quaternary structure, homohexamer.

It localises to the cytoplasm. It catalyses the reaction UMP + ATP = UDP + ADP. The protein operates within pyrimidine metabolism; CTP biosynthesis via de novo pathway; UDP from UMP (UMPK route): step 1/1. Allosterically activated by GTP. Inhibited by UTP. Its function is as follows. Catalyzes the reversible phosphorylation of UMP to UDP. This chain is Uridylate kinase, found in Staphylococcus aureus (strain Newman).